The primary structure comprises 826 residues: Zinc phosphodiesterase ELAC protein 2 (826 aa).

The transit peptide at 1–16 directs the protein to the mitochondrion; that stretch reads MWALCSLLRSATGRTM. The span at 15-27 shows a compositional bias: polar residues; sequence TMSQGRTISQGSA. 2 disordered regions span residues 15–53 and 187–231; these read TMSQ…GSSG and SEQR…VSQR. 6 positions are modified to phosphoserine: Ser199, Ser208, Ser212, Ser229, Ser618, and Ser736. A compositionally biased stretch (basic and acidic residues) spans 208–224; that stretch reads SPERSSDSESNESEPHL. Residues 798–826 form a disordered region; the sequence is ALTDDLEDGEPQQKRAHTEEPQSKKVRAQ. A compositionally biased stretch (basic and acidic residues) spans 808-820; that stretch reads PQQKRAHTEEPQS.

It belongs to the RNase Z family. As to quaternary structure, homodimer. Interacts with PTCD1. It depends on Zn(2+) as a cofactor.

It is found in the mitochondrion. The protein localises to the mitochondrion matrix. It localises to the mitochondrion nucleoid. Its subcellular location is the nucleus. It catalyses the reaction Endonucleolytic cleavage of RNA, removing extra 3' nucleotides from tRNA precursor, generating 3' termini of tRNAs. A 3'-hydroxy group is left at the tRNA terminus and a 5'-phosphoryl group is left at the trailer molecule.. In terms of biological role, zinc phosphodiesterase, which displays mitochondrial tRNA 3'-processing endonuclease activity. Involved in tRNA maturation, by removing a 3'-trailer from precursor tRNA. Associates with mitochondrial DNA complexes at the nucleoids to initiate RNA processing and ribosome assembly. The chain is Zinc phosphodiesterase ELAC protein 2 (ELAC2) from Macaca fascicularis (Crab-eating macaque).